Reading from the N-terminus, the 429-residue chain is Gamma-glutamyl phosphate reductase (429 aa).

Belongs to the gamma-glutamyl phosphate reductase family.

The protein localises to the cytoplasm. It carries out the reaction L-glutamate 5-semialdehyde + phosphate + NADP(+) = L-glutamyl 5-phosphate + NADPH + H(+). It functions in the pathway amino-acid biosynthesis; L-proline biosynthesis; L-glutamate 5-semialdehyde from L-glutamate: step 2/2. Catalyzes the NADPH-dependent reduction of L-glutamate 5-phosphate into L-glutamate 5-semialdehyde and phosphate. The product spontaneously undergoes cyclization to form 1-pyrroline-5-carboxylate. The protein is Gamma-glutamyl phosphate reductase of Methylibium petroleiphilum (strain ATCC BAA-1232 / LMG 22953 / PM1).